We begin with the raw amino-acid sequence, 20 residues long: Alanine aminotransferase 1 (20 aa).

The residue at position 11 (K11) is an N6-(pyridoxal phosphate)lysine. N-linked (Glc) (glycation) lysine; in vitro glycosylation occurs at K11.

Belongs to the class-I pyridoxal-phosphate-dependent aminotransferase family. Alanine aminotransferase subfamily. Homodimer. The cofactor is pyridoxal 5'-phosphate. Post-translationally, glycation of Lys-11 inactivates the enzyme.

Its subcellular location is the cytoplasm. It catalyses the reaction L-alanine + 2-oxoglutarate = pyruvate + L-glutamate. The protein operates within amino-acid degradation; L-alanine degradation via transaminase pathway; pyruvate from L-alanine: step 1/1. In terms of biological role, catalyzes the reversible transamination between alanine and 2-oxoglutarate to form pyruvate and glutamate. Participates in cellular nitrogen metabolism and also in liver gluconeogenesis starting with precursors transported from skeletal muscles. The sequence is that of Alanine aminotransferase 1 (GPT) from Sus scrofa (Pig).